Reading from the N-terminus, the 325-residue chain is MIWEVTKLRISMILSAIAILVLGFALIYGILGYFFGFSNAPLLITGALAFVTIFTILQWLFGPALIKSIYHLTEVDPTDPQYGWVYNLVQEVAMYNRMNTPKVYIANVPFPNAFAFESPIYGKNMAITLPLLRMLTPEEVKAVIGHEIGHLRHKDTELLLAVGLIPTLLYWIGYGLWWGGLLGGGGGGRNDNSGILFLIGIALIAFSFLFNLFVLFLNRMREAYADVNSAITVPNGAKNLQTALAKIVLSTDPDIIERYKKKYGQIGSMLLFSGFQINEDIPAYKVQELVEYWRNIKVSPFADIFSDHPHPAKRIQLLEKLTHTQ.

The next 2 helical transmembrane spans lie at 17–37 and 42–62; these read IAIL…FFGF and LLIT…WLFG. H146 is a Zn(2+) binding site. E147 is an active-site residue. Residue H150 coordinates Zn(2+). The next 2 helical transmembrane spans lie at 158-178 and 195-215; these read LLLA…GLWW and ILFL…LFVL. Zn(2+) is bound at residue E222.

Belongs to the peptidase M48B family. Requires Zn(2+) as cofactor.

The protein resides in the cell membrane. The chain is Protease HtpX homolog 2 from Sulfurisphaera tokodaii (strain DSM 16993 / JCM 10545 / NBRC 100140 / 7) (Sulfolobus tokodaii).